Reading from the N-terminus, the 1225-residue chain is Hyphally regulated cell wall protein 4 (1225 aa).

Positions 1–20 are cleaved as a signal peptide; it reads MFSYSQAIRFIIFLLPICLT. N-linked (GlcNAc...) asparagine glycosylation is found at Asn-97, Asn-200, Asn-488, Asn-595, Asn-634, and Asn-694. The interval 832–852 is disordered; sequence DLDLPDDTTFTPSQSSSTTVP. The span at 838 to 852 shows a compositional bias: low complexity; sequence DTTFTPSQSSSTTVP. Residues Asn-933 and Asn-1035 are each glycosylated (N-linked (GlcNAc...) asparagine). The disordered stretch occupies residues 1049 to 1114; sequence AYTQQDASTQ…NSHFEGTFIS (66 aa). Residues Asn-1133, Asn-1150, Asn-1182, and Asn-1193 are each glycosylated (N-linked (GlcNAc...) asparagine). The GPI-anchor amidated serine moiety is linked to residue Ser-1195. A propeptide spans 1196–1225 (removed in mature form); sequence GLISKSESVVLLIRPVMIFVFLAICVVIML.

Belongs to the HYR1/IFF family. In terms of processing, the GPI-anchor is attached to the protein in the endoplasmic reticulum and serves to target the protein to the cell surface. There, the glucosamine-inositol phospholipid moiety is cleaved off and the GPI-modified mannoprotein is covalently attached via its lipidless GPI glycan remnant to the 1,6-beta-glucan of the outer cell wall layer.

The protein resides in the secreted. It is found in the cell wall. The protein localises to the membrane. In terms of biological role, GPI-anchored cell wall protein involved in cell wall organization, hyphal growth, as well as in host-fungal interaction and virulence. The protein is Hyphally regulated cell wall protein 4 (HYR4) of Candida albicans (strain SC5314 / ATCC MYA-2876) (Yeast).